A 259-amino-acid chain; its full sequence is Putative cysteine-rich repeat secretory protein 25 (259 aa).

Residues M1–S31 form the signal peptide. Gnk2-homologous domains follow at residues A37–T138 and Y144–F256.

The protein belongs to the cysteine-rich repeat secretory protein family.

The protein resides in the secreted. This is Putative cysteine-rich repeat secretory protein 25 (CRRSP25) from Arabidopsis thaliana (Mouse-ear cress).